The primary structure comprises 265 residues: uncharacterized protein (265 aa).

Glu47 serves as a coordination point for thiamine diphosphate. Positions 204-247 (QHQMWLVQHILRVARHCGFTVTTMEMTLIETQVRLKITVKSDRT) are thiamine pyrophosphate binding.

It belongs to the TPP enzyme family. The cofactor is Mg(2+). Thiamine diphosphate is required as a cofactor.

Truncated acetolactase synthase; no longer catalytically active. This is an uncharacterized protein from Haemophilus influenzae (strain ATCC 51907 / DSM 11121 / KW20 / Rd).